The sequence spans 485 residues: Adenosylhomocysteinase (485 aa).

Substrate is bound by residues T64, D139, and E205. Residue 206-208 coordinates NAD(+); the sequence is TTT. 2 residues coordinate substrate: K235 and D239. NAD(+) contacts are provided by residues N240, 269–274, E292, N327, 348–350, and N397; these read GYGDVG and IGH.

This sequence belongs to the adenosylhomocysteinase family. The cofactor is NAD(+).

The enzyme catalyses S-adenosyl-L-homocysteine + H2O = L-homocysteine + adenosine. It functions in the pathway amino-acid biosynthesis; L-homocysteine biosynthesis; L-homocysteine from S-adenosyl-L-homocysteine: step 1/1. Its function is as follows. Adenosylhomocysteine is a competitive inhibitor of S-adenosyl-L-methionine-dependent methyl transferase reactions; therefore adenosylhomocysteinase may play a key role in the control of methylations via regulation of the intracellular concentration of adenosylhomocysteine. This Medicago sativa (Alfalfa) protein is Adenosylhomocysteinase (SAHH).